A 199-amino-acid chain; its full sequence is NAD(P)H dehydrogenase (quinone) (199 aa).

Residues 4 to 190 (ILVLYYSSWG…EGARFQGKRL (187 aa)) enclose the Flavodoxin-like domain. Residues 10–15 (SSWGHM) and 78–80 (TRY) each bind FMN. An NAD(+)-binding site is contributed by Trp12. Trp98 contacts substrate. FMN-binding positions include 113 to 119 (STATQHG) and His134. The tract at residues 155 to 175 (VRGGAPYGMTTTSDTDGSRMP) is disordered.

The protein belongs to the WrbA family. FMN serves as cofactor.

It catalyses the reaction a quinone + NADH + H(+) = a quinol + NAD(+). It carries out the reaction a quinone + NADPH + H(+) = a quinol + NADP(+). This Chelativorans sp. (strain BNC1) protein is NAD(P)H dehydrogenase (quinone).